Consider the following 975-residue polypeptide: E3 ubiquitin-protein ligase BRE1A (975 aa).

The disordered stretch occupies residues 1 to 30 (MSGIGNKRAAGEPGTSMPPEKKAAVEDSGT). Lys-21 bears the N6-acetyllysine mark. Ser-41 carries the post-translational modification Phosphoserine. A coiled-coil region spans residues 43–90 (TEELDIRTLQTKNRKLAEMLDQRQAIEDELREHIEKLERRQATDDASL). The segment at 125-155 (KALVVPEPEPDSDSNQERKDDRERGEGQEPA) is disordered. Phosphoserine occurs at positions 136 and 138. The span at 139 to 151 (NQERKDDRERGEG) shows a compositional bias: basic and acidic residues. Coiled coils occupy residues 168 to 375 (EEME…EQVV) and 429 to 898 (SLHK…TTKK). 2 positions are modified to N6-acetyllysine: Lys-348 and Lys-510. A disordered region spans residues 507–622 (DLNKTRLRSG…GKHDDGRKKE (116 aa)). Ser-522 carries the post-translational modification Phosphoserine. Over residues 527–540 (EDPKDEPAELKPDS) the composition is skewed to basic and acidic residues. The segment covering 543 to 552 (LSSQSSASKA) has biased composition (low complexity). Positions 558–622 (NEIKSKRDEE…GKHDDGRKKE (65 aa)) are enriched in basic and acidic residues. Ser-562 carries the post-translational modification Phosphoserine. The segment at 922-961 (CPCCNMRKKDAVLTKCFHVFCFECVKTRYDTRQRKCPKCN) adopts an RING-type zinc-finger fold.

Belongs to the BRE1 family. Component of the RNF20/40 complex (also known as BRE1 complex) probably composed of 2 copies of RNF20/BRE1A and 2 copies of RNF40/BRE1B. Interacts with UBE2E1/UBCH6. Interacts with p53/TP53 and WAC. Interacts with PAF1; the interaction mediates the association of the PAF1 and RNF20/40 complexes which is a prerequsite for recruitment of UBE2A/B. Interacts with isoform 1 and isoform 2 of PA2G4. Interacts with FBXL19. In terms of assembly, (Microbial infection) Interacts with human herpesvirus 8 (KSHV) protein RTA/ORF50; this interaction targets the SMC5-SMC6 complex for proteasomal degradation. As to expression, expressed in the normal brain and also in malignant gliomas (at protein level).

It localises to the nucleus. The enzyme catalyses S-ubiquitinyl-[E2 ubiquitin-conjugating enzyme]-L-cysteine + [acceptor protein]-L-lysine = [E2 ubiquitin-conjugating enzyme]-L-cysteine + N(6)-ubiquitinyl-[acceptor protein]-L-lysine.. It functions in the pathway protein modification; protein ubiquitination. In terms of biological role, component of the RNF20/40 E3 ubiquitin-protein ligase complex that mediates monoubiquitination of 'Lys-120' of histone H2B (H2BK120ub1). H2BK120ub1 gives a specific tag for epigenetic transcriptional activation and is also prerequisite for histone H3 'Lys-4' and 'Lys-79' methylation (H3K4me and H3K79me, respectively). It thereby plays a central role inb histone code and gene regulation. The RNF20/40 complex forms a H2B ubiquitin ligase complex in cooperation with the E2 enzyme UBE2A or UBE2B; reports about the cooperation with UBE2E1/UBCH are contradictory. Required for transcriptional activation of Hox genes. Recruited to the MDM2 promoter, probably by being recruited by p53/TP53, and thereby acts as a transcriptional coactivator. Mediates the polyubiquitination of isoform 2 of PA2G4 in cancer cells leading to its proteasome-mediated degradation. Functionally, (Microbial infection) Promotes the human herpesvirus 8 (KSHV) lytic cycle by inducing the expression of lytic viral genes including the latency switch gene RTA/ORF50. The chain is E3 ubiquitin-protein ligase BRE1A (RNF20) from Homo sapiens (Human).